The following is a 374-amino-acid chain: Dihydrolipoyllysine-residue acetyltransferase component of acetoin cleaving system (374 aa).

A Lipoyl-binding domain is found at 9–84 (IIPIVMPKWG…PVKALLGVLA (76 aa)). An N6-lipoyllysine modification is found at Lys-50. One can recognise an AB hydrolase-1 domain in the interval 137 to 360 (TVLFIHGFGG…DAGHMSQMEK (224 aa)).

The cofactor is (R)-lipoate.

It catalyses the reaction N(6)-[(R)-dihydrolipoyl]-L-lysyl-[protein] + acetyl-CoA = N(6)-[(R)-S(8)-acetyldihydrolipoyl]-L-lysyl-[protein] + CoA. Its pathway is ketone degradation; acetoin degradation. Dihydrolipoamide acetyltransferase involved in acetoin catabolism. This Cupriavidus necator (strain ATCC 17699 / DSM 428 / KCTC 22496 / NCIMB 10442 / H16 / Stanier 337) (Ralstonia eutropha) protein is Dihydrolipoyllysine-residue acetyltransferase component of acetoin cleaving system (acoC).